The following is a 441-amino-acid chain: MTTTRFAPSPTGYIHIGNLRTALMNYLIARKAGGTFILRIDDTDPERSKEEYVDGIKQDLEWLGLHWDRIERQSLRLDRYAQAADKLRDMGRFYEAFETPTELDLKRKKQLNMGKPPVYDRAALELSDAEKDALRAERGAGVWRFKLERERIEWADGILGDISIDAASVSDPVLIRGDGQILYTLASVVDDTEMGVTNVVRGSDHVTNTATQIQIINALGGTVPDFAHHSLLTGPQGEALSKRLGTLALRDLRENGVQPAALLSLMARLGSSDPVELQTDMADLIEGFDISRFGSAPTKFDADDLYPLTARYLAGLPLADVAGDLSAAGVPDDMAAQFWDVTRENITTLKDIGPWWTLMRDGAEPQIDDEDREFVAEALALLPDGPFDATTWGTWTAAVKEKTGRKGRALFMPLRKALTGQSHGPDMSGLMPLLQVVKARR.

Positions 8–18 (PSPTGYIHIGN) match the 'HIGH' region motif. The 'KMSKS' region signature appears at 239-243 (ALSKR). Residue K242 coordinates ATP.

The protein belongs to the class-I aminoacyl-tRNA synthetase family. Glutamate--tRNA ligase type 1 subfamily. As to quaternary structure, monomer.

Its subcellular location is the cytoplasm. The catalysed reaction is tRNA(Glu) + L-glutamate + ATP = L-glutamyl-tRNA(Glu) + AMP + diphosphate. Functionally, catalyzes the attachment of glutamate to tRNA(Glu) in a two-step reaction: glutamate is first activated by ATP to form Glu-AMP and then transferred to the acceptor end of tRNA(Glu). In Roseobacter denitrificans (strain ATCC 33942 / OCh 114) (Erythrobacter sp. (strain OCh 114)), this protein is Glutamate--tRNA ligase 1.